The primary structure comprises 145 residues: 3-dehydroquinate dehydratase (145 aa).

Tyrosine 24 serves as the catalytic Proton acceptor. Residues asparagine 75, histidine 81, and aspartate 88 each coordinate substrate. The Proton donor role is filled by histidine 101. Substrate contacts are provided by residues 102 to 103 and arginine 112; that span reads IS.

Belongs to the type-II 3-dehydroquinase family. As to quaternary structure, homododecamer.

It carries out the reaction 3-dehydroquinate = 3-dehydroshikimate + H2O. Its pathway is metabolic intermediate biosynthesis; chorismate biosynthesis; chorismate from D-erythrose 4-phosphate and phosphoenolpyruvate: step 3/7. In terms of biological role, catalyzes a trans-dehydration via an enolate intermediate. The polypeptide is 3-dehydroquinate dehydratase (Rhizobium etli (strain CIAT 652)).